The following is a 458-amino-acid chain: NADH-quinone oxidoreductase subunit N (458 aa).

14 helical membrane-spanning segments follow: residues 2–22 (LLIL…CFAL), 30–50 (IIYN…FKYS), 62–82 (GINI…SLII), 93–113 (AIKF…FVAI), 118–138 (FLLL…LAGF), 153–173 (FILG…IYGF), 196–216 (LIIG…SSPL), 235–255 (FTSA…KLII), 261–281 (INYN…AFGA), 290–310 (LMAY…ILPN), 319–339 (LYIL…IMLF), 361–381 (IAAL…LTGF), 397–417 (FTLA…YLKV), and 438–458 (LLLI…IILF).

This sequence belongs to the complex I subunit 2 family. In terms of assembly, NDH-1 is composed of 14 different subunits. Subunits NuoA, H, J, K, L, M, N constitute the membrane sector of the complex.

Its subcellular location is the cell inner membrane. It catalyses the reaction a quinone + NADH + 5 H(+)(in) = a quinol + NAD(+) + 4 H(+)(out). Its function is as follows. NDH-1 shuttles electrons from NADH, via FMN and iron-sulfur (Fe-S) centers, to quinones in the respiratory chain. The immediate electron acceptor for the enzyme in this species is believed to be ubiquinone. Couples the redox reaction to proton translocation (for every two electrons transferred, four hydrogen ions are translocated across the cytoplasmic membrane), and thus conserves the redox energy in a proton gradient. The protein is NADH-quinone oxidoreductase subunit N of Rickettsia typhi (strain ATCC VR-144 / Wilmington).